The sequence spans 401 residues: Divinyl chlorophyllide a 8-vinyl-reductase, chloroplastic (401 aa).

Positions 1–10 are enriched in polar residues; sequence MATILLSSRL. A disordered region spans residues 1–26; the sequence is MATILLSSRLPTTGTATPSPTRPAPR. A chloroplast-targeting transit peptide spans 1-54; sequence MATILLSSRLPTTGTATPSPTRPAPRFLSFPGTAIRRRGRGPLLASSAVSPPAP.

Its subcellular location is the plastid. The protein resides in the chloroplast. The enzyme catalyses protochlorophyllide a + NADP(+) = 3,8-divinyl protochlorophyllide a + NADPH + H(+). It participates in porphyrin-containing compound metabolism; chlorophyll biosynthesis. Functionally, catalyzes the conversion of divinyl chlorophyllide to monovinyl chlorophyllide. Reduces the 8-vinyl group of the tetrapyrrole to an ethyl group using NADPH as the reductant. Can use (3,8-divinyl)-chlorophyllide a (DV-Chlidea) &gt; (3,8-divinyl)-chlorophyll a (DV-Chla) &gt; (3,8-divinyl)-protochlorophyllide a (DV-Pchlidea) &gt; (3,8-divinyl)-magnesium-protoporphyrin IX monomethyl ester (DV-MPE) &gt; (3,8-divinyl)-magnesium-protoporphyrin IX (DV-Mg-Proto) as substrates. This chain is Divinyl chlorophyllide a 8-vinyl-reductase, chloroplastic (DVR), found in Zea mays (Maize).